The following is a 386-amino-acid chain: Succinate--CoA ligase [ADP-forming] subunit beta (386 aa).

In terms of domain architecture, ATP-grasp spans 9–244 (KEILRNFGVP…LDEEDPAEVE (236 aa)). ATP-binding positions include Lys46, 53–55 (GRG), Glu99, Ala102, and Glu107. Residues Asn199 and Asp213 each contribute to the Mg(2+) site. Substrate is bound by residues Asn264 and 321–323 (GIM).

It belongs to the succinate/malate CoA ligase beta subunit family. Heterotetramer of two alpha and two beta subunits. Mg(2+) is required as a cofactor.

It catalyses the reaction succinate + ATP + CoA = succinyl-CoA + ADP + phosphate. It carries out the reaction GTP + succinate + CoA = succinyl-CoA + GDP + phosphate. Its pathway is carbohydrate metabolism; tricarboxylic acid cycle; succinate from succinyl-CoA (ligase route): step 1/1. In terms of biological role, succinyl-CoA synthetase functions in the citric acid cycle (TCA), coupling the hydrolysis of succinyl-CoA to the synthesis of either ATP or GTP and thus represents the only step of substrate-level phosphorylation in the TCA. The beta subunit provides nucleotide specificity of the enzyme and binds the substrate succinate, while the binding sites for coenzyme A and phosphate are found in the alpha subunit. The chain is Succinate--CoA ligase [ADP-forming] subunit beta from Polaromonas sp. (strain JS666 / ATCC BAA-500).